The chain runs to 138 residues: Ribosome-binding factor A (138 aa).

The segment at 117 to 138 (AEDGQHQEGPASADAKPESTEE) is disordered.

Belongs to the RbfA family. As to quaternary structure, monomer. Binds 30S ribosomal subunits, but not 50S ribosomal subunits or 70S ribosomes.

The protein localises to the cytoplasm. In terms of biological role, one of several proteins that assist in the late maturation steps of the functional core of the 30S ribosomal subunit. Associates with free 30S ribosomal subunits (but not with 30S subunits that are part of 70S ribosomes or polysomes). Required for efficient processing of 16S rRNA. May interact with the 5'-terminal helix region of 16S rRNA. This is Ribosome-binding factor A from Pseudomonas syringae pv. syringae (strain B728a).